The sequence spans 691 residues: Elongation factor G 1 (691 aa).

One can recognise a tr-type G domain in the interval 8 to 282 (ERVRNIGIAA…AVVDYLPAPQ (275 aa)). GTP is bound by residues 17–24 (AHIDAGKT), 81–85 (DTPGH), and 135–138 (NKMD).

The protein belongs to the TRAFAC class translation factor GTPase superfamily. Classic translation factor GTPase family. EF-G/EF-2 subfamily.

The protein localises to the cytoplasm. In terms of biological role, catalyzes the GTP-dependent ribosomal translocation step during translation elongation. During this step, the ribosome changes from the pre-translocational (PRE) to the post-translocational (POST) state as the newly formed A-site-bound peptidyl-tRNA and P-site-bound deacylated tRNA move to the P and E sites, respectively. Catalyzes the coordinated movement of the two tRNA molecules, the mRNA and conformational changes in the ribosome. The protein is Elongation factor G 1 of Trichodesmium erythraeum (strain IMS101).